Here is a 369-residue protein sequence, read N- to C-terminus: MSTGLRYKSKLATPEDKQDIDKQYVGFATLPNQVHRKSVKKGFDFTLMVAGESGLGKSTLVHSLFLTDLYKDRKLLSAEERISQTVEILKHTVDIEEKGVKLKLTIVDTPGFGDAVNNTECWKPITDYVDQQFEQYFRDESGLNRKNIQDNRVHCCLYFISPFGHGLRPVDVGFMKALHEKVNIVPLIAKADCLVPSEIRKLKERIREEIDKFGIHVYQFPECDSDEDEDFKQQDRELKESAPFAVIGSNTVVEAKGQRVRGRLYPWGIVEVENQAHCDFVKLRNMLIRTHMHDLKDVTCDVHYENYRAHCIQQMTSKLTQDSRMESPIPILPLPTPDAETEKLIRMKDEELRRMQEMLQRMKQQMQDQ.

Residue threonine 13 is modified to Phosphothreonine. A Septin-type G domain is found at lysine 41–glutamine 314. Residues glycine 51–serine 58 are G1 motif. GTP is bound by residues glycine 51–serine 58, threonine 85, and glycine 111. Positions aspartate 108 to glycine 111 are G3 motif. Omega-N-methylarginine is present on arginine 168. The tract at residues alanine 189–aspartate 192 is G4 motif. Lysine 190 to glutamate 198 contacts GTP. Position 225 is a phosphoserine (serine 225). GTP-binding residues include glycine 248 and arginine 263. Serine 327 bears the Phosphoserine mark. Residue threonine 336 is modified to Phosphothreonine. A coiled-coil region spans residues aspartate 338 to glutamine 369.

Belongs to the TRAFAC class TrmE-Era-EngA-EngB-Septin-like GTPase superfamily. Septin GTPase family. Septins polymerize into heterooligomeric protein complexes that form filaments, and can associate with cellular membranes, actin filaments and microtubules. GTPase activity is required for filament formation. Interacts with SEPTIN2 and SEPTIN5. In platelets, associated with a complex containing STX4. Interacts with PRKN; this interaction leads to SEPTIN5 ubiquitination and degradation. Interacts with DYRK1A. Interacts with STX1A; in the cerebellar cortex. In terms of processing, phosphorylated by DYRK1A. In platelets, phosphorylated in response to thrombin, phorbol-12-myristate-13-acetate and collagen. In terms of tissue distribution, expressed at high levels in the CNS, as well as in heart and platelets (at protein level).

Its subcellular location is the cytoplasm. The protein resides in the cytoskeleton. Functionally, filament-forming cytoskeletal GTPase. May play a role in cytokinesis (Potential). May play a role in platelet secretion. In Homo sapiens (Human), this protein is Septin-5.